The sequence spans 356 residues: Protein RecA (356 aa).

Residue 77–84 coordinates ATP; the sequence is GPESSGKT.

This sequence belongs to the RecA family.

It is found in the cytoplasm. In terms of biological role, can catalyze the hydrolysis of ATP in the presence of single-stranded DNA, the ATP-dependent uptake of single-stranded DNA by duplex DNA, and the ATP-dependent hybridization of homologous single-stranded DNAs. It interacts with LexA causing its activation and leading to its autocatalytic cleavage. This chain is Protein RecA, found in Caulobacter vibrioides (strain ATCC 19089 / CIP 103742 / CB 15) (Caulobacter crescentus).